The following is an 836-amino-acid chain: MSDTDGKKPLGLGGGSRSGQVKQSFSHGRTKSVLVETKRKRVVVPKPGASGSSTTTSSPSHLGDPAKRPAGISDAEMERRLAALRAAKLREVEDAKRRADEERQREEERQRRREELEAKEREERERAEALRQKAEDEERARREAEEAARRAEEAKRAPAPAAPQPAPAESRASAPPSAKPGLPPSRKEREREADRDRTTKKDDSRRSGKLTLNEALSGEGGRTRSLAAMKRKQEKARQKAMGFGHKAEKQVRDVQLPETILVQELANRMAERAADVVKALMKMGMMVTMNQSIDADTAELVIEEFGHRAVRVSDADVEHVIDTVEDKAEDLQPRPPIITIMGHVDHGKTSLLDAIRKTSVVSGEAGGITQHIGAYQVKTESGAVLTFLDTPGHAAFTSMRARGAQVTDIVVLVVAADDAVMPQTVEAIKHAKAAKVPMIVAINKIDKPDADPNKVRTDLLQHEVIVEKMSGDVLDVEVSAKTGLGLDELLENIALQAEILDLRANPSRQAQGAVIEAKLDVGRGPVATVLVQYGTLKRGDIFVVGQQWGKVRALINDKGERVDEAGPSVPVEVLGLNGTPEAGDVLNVVETEAQAREIADYREKAARDKRAAAGAATTLEQLMAKAKADADVAELPVVIKADVQGSAEAIVQALEKVGNDEVRVRVLHYGVGAITETDITLAEASQAAVIGFNVRANASARQAANQKSVEIRYYSVIYDLVDDVKKAASGLLKAEVREHFIGYAQIKEVFRITGVGNVAGCIVTEGVARRSAGVRLLRDNIVIHEGTLKTLKRFKDEVKEVQSGQECGMAFERYEDIRPGDVIEIFEREEVQRKLA.

The disordered stretch occupies residues 1–233; sequence MSDTDGKKPL…RSLAAMKRKQ (233 aa). Positions 18-27 are enriched in polar residues; the sequence is SGQVKQSFSH. A compositionally biased stretch (low complexity) spans 50–60; that stretch reads SGSSTTTSSPS. Over residues 88–156 the composition is skewed to basic and acidic residues; sequence KLREVEDAKR…AARRAEEAKR (69 aa). The span at 167 to 176 shows a compositional bias: low complexity; sequence PAESRASAPP. A compositionally biased stretch (basic and acidic residues) spans 185-206; sequence SRKEREREADRDRTTKKDDSRR. The 169-residue stretch at 333 to 501 folds into the tr-type G domain; that stretch reads PRPPIITIMG…NIALQAEILD (169 aa). The tract at residues 342–349 is G1; the sequence is GHVDHGKT. 342–349 is a GTP binding site; it reads GHVDHGKT. A G2 region spans residues 367–371; it reads GITQH. The segment at 389–392 is G3; sequence DTPG. GTP-binding positions include 389 to 393 and 443 to 446; these read DTPGH and NKID. The interval 443 to 446 is G4; that stretch reads NKID. The tract at residues 479–481 is G5; that stretch reads SAK.

It belongs to the TRAFAC class translation factor GTPase superfamily. Classic translation factor GTPase family. IF-2 subfamily.

Its subcellular location is the cytoplasm. One of the essential components for the initiation of protein synthesis. Protects formylmethionyl-tRNA from spontaneous hydrolysis and promotes its binding to the 30S ribosomal subunits. Also involved in the hydrolysis of GTP during the formation of the 70S ribosomal complex. The protein is Translation initiation factor IF-2 of Cereibacter sphaeroides (strain ATCC 17023 / DSM 158 / JCM 6121 / CCUG 31486 / LMG 2827 / NBRC 12203 / NCIMB 8253 / ATH 2.4.1.) (Rhodobacter sphaeroides).